Reading from the N-terminus, the 269-residue chain is Cytochrome c oxidase subunit 3 (269 aa).

Helical transmembrane passes span 7 to 29 (GYLQ…TSFS), 51 to 71 (IILS…DIIA), 90 to 110 (GFLL…WAYL), 127 to 147 (VGID…ILLA), 167 to 187 (TLYG…FQFL), 205 to 225 (FYSL…MLVI), and 247 to 267 (ILYL…VYWW).

It belongs to the cytochrome c oxidase subunit 3 family. As to quaternary structure, component of the cytochrome c oxidase (complex IV, CIV), a multisubunit enzyme composed of a catalytic core of 3 subunits and several supernumerary subunits. The complex exists as a monomer or a dimer and forms supercomplexes (SCs) in the inner mitochondrial membrane with ubiquinol-cytochrome c oxidoreductase (cytochrome b-c1 complex, complex III, CIII).

It is found in the mitochondrion inner membrane. It catalyses the reaction 4 Fe(II)-[cytochrome c] + O2 + 8 H(+)(in) = 4 Fe(III)-[cytochrome c] + 2 H2O + 4 H(+)(out). In terms of biological role, component of the cytochrome c oxidase, the last enzyme in the mitochondrial electron transport chain which drives oxidative phosphorylation. The respiratory chain contains 3 multisubunit complexes succinate dehydrogenase (complex II, CII), ubiquinol-cytochrome c oxidoreductase (cytochrome b-c1 complex, complex III, CIII) and cytochrome c oxidase (complex IV, CIV), that cooperate to transfer electrons derived from NADH and succinate to molecular oxygen, creating an electrochemical gradient over the inner membrane that drives transmembrane transport and the ATP synthase. Cytochrome c oxidase is the component of the respiratory chain that catalyzes the reduction of oxygen to water. Electrons originating from reduced cytochrome c in the intermembrane space (IMS) are transferred via the dinuclear copper A center (CU(A)) of subunit 2 and heme A of subunit 1 to the active site in subunit 1, a binuclear center (BNC) formed by heme A3 and copper B (CU(B)). The BNC reduces molecular oxygen to 2 water molecules using 4 electrons from cytochrome c in the IMS and 4 protons from the mitochondrial matrix. The protein is Cytochrome c oxidase subunit 3 (COX3) of Candida parapsilosis (Yeast).